The sequence spans 1392 residues: MEVLMAERVNLVFHNKVIDGTAIKRLISRLIDHFGMAYTSHILDQVKTLGFQQATATSISLGIDDLLTIPSKGWLVQDAEQQSLILEKHHHYGNVHAVEKLRQSIEVWYATSEYLRQEMNPNFRMTDPFNPVHIMSFSGARGNASQVHQLVGMRGLMSDPQGQMIDLPIQSNLREGLSLTEYIISCYGARKGVVDTAVRTSDAGYLTRRLVEVVQHIVVRRTDCGTIRGVSVSPRNGMMPERIFIQTLIGRVLADDIYMGPRCIAIRNQDIGIGLVNRFITFRTQPISIRTPFTCRSTSWICRLCYGRSPTHGDLVELGEAVGIIAGQSIGEPGTQLTLRTFHTGGVFTGGTAEHVRAPSNGKIKFNDDLVHPTRTRHGHPAFLCSIDLYVTIESEDILHNVTIPPKSFLLVQNNQYVESEQVIAEIRAGTYTFNLKERVRKHIYSESEGEMHWSTDVYHAPEFTYSNVHLLPKTSHLWILSGGSCRSSRVPFSLYKDQDQMNLRSTERERRYISSLSVNNDQMRYELCSSDFSGKIKEDRIPDYSELNRIISIVHCNLKYPTTFDENSDLLAKRRRNRFLIPLQSIQERKKELMPHSGISIELPINGILRRNSILAYFDDPRYRRKSSGIIKYGTLGVHSVVKKEDLIEYRGIKEFKQKCQMKLDPFFFIPEEVHIFPESSSIMVRNNSLIGVDTRIALNTRSRVGGLVRVERKKKRIELKIFSGDIHFPGETDKISRHSGILIPPGTGKTNFKESKKWKNWIYVQRITPTKKKYFVLVRPVVTYEVLDGINLATLFPPDLLQERDNMQLRVVNYIVYRNGKPIRGISDTSIQLVRTCLILNWDQDKKSSSIEEAHTSFVEVSTNGLIRDFLRIDLVKFPISYLRKRNDPSGSGLISDSDNVSDHTNSNPFYSKTKIQQLLSQNQGTIRTLLNKNKECPSLIILSSSNCFRMGPFNAGKYHNVIKESIKKDPIIKIRNSIGPLGTVLQFVNFYSFYYLITHNPILVTKYLQLENLKQTFQVINYYLMDENGRILNPDSCSNIVLNSFNLNWYFLHHNYYHNYFEERSTIISLGQFICENVCISKNGPHLKSGQVLIVQVDSVVIRSAKPYLATPGATVHGHYGEILYEGDTLVTFIYEKSRSGDITQGLPKVEQVLEVRSIDSISMNLEKRIEGWNEHIKKILGIPWGFLIGAELTIVQSRISLVNKIQKVYRSQGVQIHNRHIEIIVRQITSKVLVSEDGMSNVFLPGELIGLLRAARTGRALEESICYRAILLGITRASLNTQSFISEASFQETARVLAKAALRGRIDWLKGLKENVVIGGMIPVGTGFKGLVHRSRQHKNIPLKTKKKNFFEGEIGDILFHHRELFDSSISKKFHDTSEQSFRGFNDS.

4 residues coordinate Zn(2+): Cys-224, Cys-295, Cys-302, and Cys-305.

It belongs to the RNA polymerase beta' chain family. RpoC2 subfamily. In terms of assembly, in plastids the minimal PEP RNA polymerase catalytic core is composed of four subunits: alpha, beta, beta', and beta''. When a (nuclear-encoded) sigma factor is associated with the core the holoenzyme is formed, which can initiate transcription. It depends on Zn(2+) as a cofactor.

Its subcellular location is the plastid. It is found in the chloroplast. The enzyme catalyses RNA(n) + a ribonucleoside 5'-triphosphate = RNA(n+1) + diphosphate. Functionally, DNA-dependent RNA polymerase catalyzes the transcription of DNA into RNA using the four ribonucleoside triphosphates as substrates. The sequence is that of DNA-directed RNA polymerase subunit beta'' from Eucalyptus globulus subsp. globulus (Tasmanian blue gum).